The chain runs to 132 residues: Aspartate 1-decarboxylase (132 aa).

S25 (schiff-base intermediate with substrate; via pyruvic acid) is an active-site residue. S25 is modified (pyruvic acid (Ser)). Substrate is bound at residue T57. Catalysis depends on Y58, which acts as the Proton donor. Residue 73–75 (GAA) participates in substrate binding.

It belongs to the PanD family. In terms of assembly, heterooctamer of four alpha and four beta subunits. Requires pyruvate as cofactor. Is synthesized initially as an inactive proenzyme, which is activated by self-cleavage at a specific serine bond to produce a beta-subunit with a hydroxyl group at its C-terminus and an alpha-subunit with a pyruvoyl group at its N-terminus.

It localises to the cytoplasm. It catalyses the reaction L-aspartate + H(+) = beta-alanine + CO2. The protein operates within cofactor biosynthesis; (R)-pantothenate biosynthesis; beta-alanine from L-aspartate: step 1/1. Its function is as follows. Catalyzes the pyruvoyl-dependent decarboxylation of aspartate to produce beta-alanine. The sequence is that of Aspartate 1-decarboxylase from Pelotomaculum thermopropionicum (strain DSM 13744 / JCM 10971 / SI).